Consider the following 245-residue polypeptide: tRNA (guanine-N(1)-)-methyltransferase (245 aa).

S-adenosyl-L-methionine-binding positions include G113 and 133-138 (IGDYVL).

Belongs to the RNA methyltransferase TrmD family. In terms of assembly, homodimer.

The protein localises to the cytoplasm. It catalyses the reaction guanosine(37) in tRNA + S-adenosyl-L-methionine = N(1)-methylguanosine(37) in tRNA + S-adenosyl-L-homocysteine + H(+). Specifically methylates guanosine-37 in various tRNAs. This is tRNA (guanine-N(1)-)-methyltransferase from Anoxybacillus flavithermus (strain DSM 21510 / WK1).